The chain runs to 70 residues: Large ribosomal subunit protein eL38 (70 aa).

It belongs to the eukaryotic ribosomal protein eL38 family.

This chain is Large ribosomal subunit protein eL38 (RPL38), found in Branchiostoma belcheri (Amphioxus).